The chain runs to 419 residues: Histidine--tRNA ligase (419 aa).

This sequence belongs to the class-II aminoacyl-tRNA synthetase family. As to quaternary structure, homodimer.

The protein resides in the cytoplasm. The enzyme catalyses tRNA(His) + L-histidine + ATP = L-histidyl-tRNA(His) + AMP + diphosphate + H(+). The protein is Histidine--tRNA ligase of Syntrophotalea carbinolica (strain DSM 2380 / NBRC 103641 / GraBd1) (Pelobacter carbinolicus).